Consider the following 384-residue polypeptide: Acetylornithine aminotransferase (384 aa).

Pyridoxal 5'-phosphate-binding positions include G95–A96 and F122. R125 provides a ligand contact to N(2)-acetyl-L-ornithine. D207–Q210 is a binding site for pyridoxal 5'-phosphate. K236 carries the post-translational modification N6-(pyridoxal phosphate)lysine. S264 is a N(2)-acetyl-L-ornithine binding site. T265 lines the pyridoxal 5'-phosphate pocket.

It belongs to the class-III pyridoxal-phosphate-dependent aminotransferase family. ArgD subfamily. Homodimer. The cofactor is pyridoxal 5'-phosphate.

It localises to the cytoplasm. It catalyses the reaction N(2)-acetyl-L-ornithine + 2-oxoglutarate = N-acetyl-L-glutamate 5-semialdehyde + L-glutamate. It participates in amino-acid biosynthesis; L-arginine biosynthesis; N(2)-acetyl-L-ornithine from L-glutamate: step 4/4. The sequence is that of Acetylornithine aminotransferase from Halalkalibacterium halodurans (strain ATCC BAA-125 / DSM 18197 / FERM 7344 / JCM 9153 / C-125) (Bacillus halodurans).